The following is a 244-amino-acid chain: tRNA pseudouridine synthase A (244 aa).

Catalysis depends on Asp-52, which acts as the Nucleophile. Tyr-110 provides a ligand contact to substrate.

The protein belongs to the tRNA pseudouridine synthase TruA family. Homodimer.

It carries out the reaction uridine(38/39/40) in tRNA = pseudouridine(38/39/40) in tRNA. In terms of biological role, formation of pseudouridine at positions 38, 39 and 40 in the anticodon stem and loop of transfer RNAs. In Clostridium acetobutylicum (strain ATCC 824 / DSM 792 / JCM 1419 / IAM 19013 / LMG 5710 / NBRC 13948 / NRRL B-527 / VKM B-1787 / 2291 / W), this protein is tRNA pseudouridine synthase A.